A 552-amino-acid polypeptide reads, in one-letter code: 4-coumarate--CoA ligase-like 4 (552 aa).

The disordered stretch occupies residues 182-205 (ISATTPDPARRKDRVTQDDPATLL). The segment covering 189–198 (PARRKDRVTQ) has biased composition (basic and acidic residues). Ser-207, Ser-208, Gly-209, Thr-210, Thr-211, and Lys-215 together coordinate ATP. Tyr-256 contacts (E)-4-coumaroyl-AMP. Lys-277 provides a ligand contact to CoA. The interval 279-346 (ELPEMLRSIN…EKYPQVEILQ (68 aa)) is SBD1. (E)-4-coumaroyl-AMP-binding residues include Gly-324, Gln-346, Gly-347, and Thr-351. ATP is bound by residues Gln-346, Gly-347, Thr-351, Asp-432, and Arg-447. Residues 347-411 (GYGLTESTAI…IRGPYVMKGY (65 aa)) form an SBD2 region. 2 residues coordinate (E)-4-coumaroyl-AMP: Lys-449 and Lys-453. Residues Lys-455 and Gly-456 each coordinate CoA. Lys-538 is a binding site for ATP.

It belongs to the ATP-dependent AMP-binding enzyme family. Mg(2+) serves as cofactor.

The enzyme catalyses (E)-4-coumarate + ATP + CoA = (E)-4-coumaroyl-CoA + AMP + diphosphate. It carries out the reaction (E)-4-coumarate + ATP + H(+) = (E)-4-coumaroyl-AMP + diphosphate. The catalysed reaction is (E)-4-coumaroyl-AMP + CoA = (E)-4-coumaroyl-CoA + AMP + H(+). Functionally, carboxylate--CoA ligase that may use 4-coumarate as substrate. Follows a two-step reaction mechanism, wherein the carboxylate substrate first undergoes adenylation by ATP, followed by a thioesterification in the presence of CoA to yield the final CoA thioester. In Oryza sativa subsp. japonica (Rice), this protein is 4-coumarate--CoA ligase-like 4 (4CLL4).